The chain runs to 609 residues: Proteasome-associated ATPase (609 aa).

A disordered region spans residues methionine 1 to aspartate 22. Residues serine 20–glutamine 96 adopt a coiled-coil conformation. Glycine 296–leucine 301 contributes to the ATP binding site. Positions tyrosine 608–leucine 609 are docks into pockets in the proteasome alpha-ring.

The protein belongs to the AAA ATPase family. As to quaternary structure, homohexamer. Assembles into a hexameric ring structure that caps the 20S proteasome core. Strongly interacts with the prokaryotic ubiquitin-like protein Pup through a hydrophobic interface; the interacting region of ARC lies in its N-terminal coiled-coil domain. There is one Pup binding site per ARC hexamer ring. Upon ATP-binding, the C-terminus of ARC interacts with the alpha-rings of the proteasome core, possibly by binding to the intersubunit pockets.

It functions in the pathway protein degradation; proteasomal Pup-dependent pathway. In terms of biological role, ATPase which is responsible for recognizing, binding, unfolding and translocation of pupylated proteins into the bacterial 20S proteasome core particle. May be essential for opening the gate of the 20S proteasome via an interaction with its C-terminus, thereby allowing substrate entry and access to the site of proteolysis. Thus, the C-termini of the proteasomal ATPase may function like a 'key in a lock' to induce gate opening and therefore regulate proteolysis. This chain is Proteasome-associated ATPase, found in Mycobacterium leprae (strain Br4923).